Consider the following 770-residue polypeptide: Lysine-specific histone demethylase 1 (770 aa).

The segment at 1–21 (MSSDTGSEYLDEEIRGDELGP) is disordered. Residues 28-126 (LAAAASAARL…FGRYVRSTKI (99 aa)) form the SWIRM domain. Position 137–165 (137–165 (VIVIGAGAAGISAATQLESFGFDVIVLEA)) interacts with FAD. The interval 718-739 (NEAVADIPNAPNAPNAQKPEEI) is disordered.

Belongs to the flavin monoamine oxidase family. Probably part of a large repressor complex. Interacts with CoREST protein spr-1. Interacts with chromobox protein homolog hpl-1. It depends on FAD as a cofactor.

It is found in the nucleus. The catalysed reaction is N(6),N(6)-dimethyl-L-lysyl(4)-[histone H3] + 2 A + 2 H2O = L-lysyl(4)-[histone H3] + 2 formaldehyde + 2 AH2. Histone demethylase that specifically demethylates 'Lys-4' of histone H3, a specific tag for epigenetic transcriptional activation, thereby acting as a corepressor. Acts by oxidizing the substrate by FAD to generate the corresponding imine that is subsequently hydrolyzed. Demethylates both mono- and di-methylated 'Lys-4' of histone H3. May be involved in H3 demethylation in mitotic cells including gut and embryonic cells. Participates in the transcriptional repression of the presenilin protein hop-1. May act via the formation of a multiprotein complex that remodel or modify the chromatin. Together with met-2, set-17 and set-26, required for transgenerational fertility. Plays a role in developmental growth and lifespan regulation in response to ultraviolet-induced damage. The protein is Lysine-specific histone demethylase 1 of Caenorhabditis elegans.